The chain runs to 185 residues: Elongation factor P (185 aa).

Belongs to the elongation factor P family.

The protein resides in the cytoplasm. It functions in the pathway protein biosynthesis; polypeptide chain elongation. Functionally, involved in peptide bond synthesis. Stimulates efficient translation and peptide-bond synthesis on native or reconstituted 70S ribosomes in vitro. Probably functions indirectly by altering the affinity of the ribosome for aminoacyl-tRNA, thus increasing their reactivity as acceptors for peptidyl transferase. This Paraburkholderia xenovorans (strain LB400) protein is Elongation factor P.